Consider the following 204-residue polypeptide: Protein G1-like5 (204 aa).

Disordered regions lie at residues 1-45 (MEFV…ESQK) and 157-204 (RARG…GAAA). A compositionally biased stretch (low complexity) spans 26 to 39 (TGATSASAAGASPS). The ALOG domain occupies 40–167 (RYESQKRRDW…ARGVSYEKKK (128 aa)). The Nuclear localization signal signature appears at 165 to 169 (KKKRK).

The protein belongs to the plant homeotic and developmental regulators ALOG protein family.

It is found in the nucleus. In terms of biological role, probable transcription regulator that acts as a developmental regulator by promoting cell growth in response to light. This Oryza sativa subsp. japonica (Rice) protein is Protein G1-like5 (G1L5).